The following is a 147-amino-acid chain: uncharacterized protein (147 aa).

Helical transmembrane passes span 41 to 61 and 67 to 87; these read LANF…ALLI and LLAA…SFPL.

It is found in the cell membrane. This is an uncharacterized protein from Pyrococcus horikoshii (strain ATCC 700860 / DSM 12428 / JCM 9974 / NBRC 100139 / OT-3).